The chain runs to 597 residues: Aspartate--tRNA(Asp/Asn) ligase (597 aa).

Glu175 is a binding site for L-aspartate. The tract at residues 199–202 (QQYK) is aspartate. 2 residues coordinate L-aspartate: Arg221 and His454. 221 to 223 (RDE) contacts ATP. ATP is bound at residue Glu488. Position 495 (Arg495) interacts with L-aspartate. 540-543 (GVDR) serves as a coordination point for ATP.

The protein belongs to the class-II aminoacyl-tRNA synthetase family. Type 1 subfamily. As to quaternary structure, homodimer.

It is found in the cytoplasm. The enzyme catalyses tRNA(Asx) + L-aspartate + ATP = L-aspartyl-tRNA(Asx) + AMP + diphosphate. Functionally, aspartyl-tRNA synthetase with relaxed tRNA specificity since it is able to aspartylate not only its cognate tRNA(Asp) but also tRNA(Asn). Reaction proceeds in two steps: L-aspartate is first activated by ATP to form Asp-AMP and then transferred to the acceptor end of tRNA(Asp/Asn). This chain is Aspartate--tRNA(Asp/Asn) ligase, found in Bartonella quintana (strain Toulouse) (Rochalimaea quintana).